The sequence spans 184 residues: Elongation factor P (184 aa).

This sequence belongs to the elongation factor P family.

The protein localises to the cytoplasm. The protein operates within protein biosynthesis; polypeptide chain elongation. Its function is as follows. Involved in peptide bond synthesis. Stimulates efficient translation and peptide-bond synthesis on native or reconstituted 70S ribosomes in vitro. Probably functions indirectly by altering the affinity of the ribosome for aminoacyl-tRNA, thus increasing their reactivity as acceptors for peptidyl transferase. In Verminephrobacter eiseniae (strain EF01-2), this protein is Elongation factor P.